Reading from the N-terminus, the 359-residue chain is 4-hydroxy-2-oxovalerate aldolase 1 (359 aa).

Residues 23-275 (VRVTDTSLRD…KTGIDFFDIA (253 aa)) form the Pyruvate carboxyltransferase domain. A substrate-binding site is contributed by 31 to 32 (RD). Residue Asp32 participates in Mn(2+) binding. The active-site Proton acceptor is the His35. The substrate site is built by Ser185 and His214. 2 residues coordinate Mn(2+): His214 and His216. Tyr305 lines the substrate pocket.

Belongs to the 4-hydroxy-2-oxovalerate aldolase family.

The catalysed reaction is (S)-4-hydroxy-2-oxopentanoate = acetaldehyde + pyruvate. This is 4-hydroxy-2-oxovalerate aldolase 1 from Mycobacteroides abscessus (strain ATCC 19977 / DSM 44196 / CCUG 20993 / CIP 104536 / JCM 13569 / NCTC 13031 / TMC 1543 / L948) (Mycobacterium abscessus).